The chain runs to 110 residues: Iron-sulfur cluster insertion protein ErpA (110 aa).

Residues C38, C102, and C104 each coordinate iron-sulfur cluster.

This sequence belongs to the HesB/IscA family. In terms of assembly, homodimer. The cofactor is iron-sulfur cluster.

Required for insertion of 4Fe-4S clusters for at least IspG. The chain is Iron-sulfur cluster insertion protein ErpA from Marinobacter nauticus (strain ATCC 700491 / DSM 11845 / VT8) (Marinobacter aquaeolei).